The following is a 1026-amino-acid chain: Multidrug resistance protein MdtC (1026 aa).

11 helical membrane-spanning segments follow: residues 15–35, 333–353, 360–380, 387–407, 431–451, 463–483, 528–548, 853–873, 897–917, 953–973, and 984–1004; these read ILIA…LPVA, EVEE…FLFL, LIPA…MYLC, LSLM…IVVL, VGFT…PLLL, FAVT…TLTP, LVGV…IAIP, LILI…LYES, LFNA…IGIV, PIMM…LSGG, and ITIV…TPVV.

It belongs to the resistance-nodulation-cell division (RND) (TC 2.A.6) family. MdtC subfamily. Part of a tripartite efflux system composed of MdtA, MdtB and MdtC. MdtC forms a heteromultimer with MdtB.

Its subcellular location is the cell inner membrane. The protein is Multidrug resistance protein MdtC of Salmonella newport (strain SL254).